Consider the following 623-residue polypeptide: Endoglucanase 12 (623 aa).

Residues 1–73 (MYSANHWGGS…LGCVVVKRKL (73 aa)) are Cytoplasmic-facing. A helical; Signal-anchor for type II membrane protein transmembrane segment spans residues 74–94 (LWWVLWTLLAAFILIGLPVII). Residues 95 to 623 (AKSIPKKKPH…TPPPPSKWKP (529 aa)) lie on the Extracellular side of the membrane. Residue Asp-166 is the Nucleophile of the active site. Asn-217, Asn-236, Asn-324, Asn-345, Asn-408, and Asn-425 each carry an N-linked (GlcNAc...) asparagine glycan. Residues His-513, Asp-561, and Glu-570 contribute to the active site.

This sequence belongs to the glycosyl hydrolase 9 (cellulase E) family. In terms of tissue distribution, ubiquitous.

The protein localises to the membrane. It catalyses the reaction Endohydrolysis of (1-&gt;4)-beta-D-glucosidic linkages in cellulose, lichenin and cereal beta-D-glucans.. This chain is Endoglucanase 12 (GLU3), found in Oryza sativa subsp. japonica (Rice).